The following is a 420-amino-acid chain: Cell division protein FtsA (420 aa).

Belongs to the FtsA/MreB family. Self-interacts. Interacts with FtsZ.

It localises to the cell inner membrane. In terms of biological role, cell division protein that is involved in the assembly of the Z ring. May serve as a membrane anchor for the Z ring. The protein is Cell division protein FtsA of Escherichia coli O157:H7.